The following is a 480-amino-acid chain: MTVRVRIAPSPTGNLHIGTARTAVFNWLFARHHGGTFILRIEDTDLERSRPEYTENIMTGLRWLGLNWDEGPFFQSQRLDLYQKAVKQLLDQGLAYRCYTTSEELEALREGQKAKGEAPRYDNRHRHLTPEQEAEFKAQGRSFVIRFKIDDEREIVWNDLVRGKMSWRGSDLGGDMVIARASENDTGQPLYNFVVVIDDIDMQISHVIRGEDHIANTAKQILLYEAFGAKIPEFAHTPLILNMEGRKLSKRDGVTSISDFKQMGFTSEGLVNYMTLLGWSPPDSTQEIFTLEAAAKEFTFERVNKAGAKFDWAKLDWLNSQYIHNTPVDQLTDLLIPYWEAAGYSLAGGRDRPWLEQLVGLLSASLTRLTDAVDMSKLFFTETVELSEEGSKQLQQEGSKAVLEAIIAALETQAQLTETAAQDIIKQVVKGQNVKKGLVMRSLRVALTGDVHGPDLIQSWLLLNQIGLDKPRLNQAIAVS.

A 'HIGH' region motif is present at residues P9–T19. The short motif at K247–R251 is the 'KMSKS' region element. An ATP-binding site is contributed by K250.

It belongs to the class-I aminoacyl-tRNA synthetase family. Glutamate--tRNA ligase type 1 subfamily. In terms of assembly, monomer.

The protein localises to the cytoplasm. It catalyses the reaction tRNA(Glu) + L-glutamate + ATP = L-glutamyl-tRNA(Glu) + AMP + diphosphate. Its function is as follows. Catalyzes the attachment of glutamate to tRNA(Glu) in a two-step reaction: glutamate is first activated by ATP to form Glu-AMP and then transferred to the acceptor end of tRNA(Glu). The polypeptide is Glutamate--tRNA ligase (Nostoc sp. (strain PCC 7120 / SAG 25.82 / UTEX 2576)).